A 212-amino-acid chain; its full sequence is Pyrrolidone-carboxylate peptidase (212 aa).

Active-site residues include E80, C143, and H165.

Belongs to the peptidase C15 family. Homotetramer.

It is found in the cytoplasm. It catalyses the reaction Release of an N-terminal pyroglutamyl group from a polypeptide, the second amino acid generally not being Pro.. Functionally, removes 5-oxoproline from various penultimate amino acid residues except L-proline. The protein is Pyrrolidone-carboxylate peptidase of Vibrio parahaemolyticus serotype O3:K6 (strain RIMD 2210633).